The primary structure comprises 190 residues: Jupiter microtubule associated homolog 2 (190 aa).

Position 1 is an N-acetylmethionine (Met-1). The segment at 1 to 190 (MFQVPDSEGG…PGGKSSISFY (190 aa)) is disordered. Ser-30 is subject to Phosphoserine. Position 35 is a phosphothreonine (Thr-35). Over residues 35-44 (TPSSRPNRMA) the composition is skewed to polar residues. Phosphoserine is present on residues Ser-45, Ser-69, and Ser-97. Over residues 110–129 (KPKDHVFLCEGEEPKSDLKA) the composition is skewed to basic and acidic residues. Ser-132 and Ser-144 each carry phosphoserine. Positions 139–167 (PGEKGSARKAGPAKEQEPMPTVDSHEPRL) are enriched in basic and acidic residues.

The protein belongs to the JUPITER family. As to quaternary structure, monomer. Dimer. Interacts with TPCN1. In terms of tissue distribution, expressed in liver, kidney, prostate, testis and uterus.

It is found in the cytoplasm. The protein localises to the nucleus. Functionally, nicotinic acid adenine dinucleotide phosphate (NAADP) binding protein required for NAADP-evoked intracellular calcium release. Confers NAADP-sensitivity to the two pore channels (TPCs) complex. Enables NAADP to activate Ca(2+) release from the endoplasmic reticulum through ryanodine receptors. (Microbial infection) Involved in the endolysosomal trafficking of human coronavirus SARS-CoV-2. This is Jupiter microtubule associated homolog 2 from Homo sapiens (Human).